We begin with the raw amino-acid sequence, 160 residues long: Putative NrdI-like protein (160 aa).

It belongs to the NrdI family.

This chain is Putative NrdI-like protein, found in Streptococcus pyogenes serotype M3 (strain ATCC BAA-595 / MGAS315).